The sequence spans 24 residues: GWASKIGTQLGKMAKVGLKEFVQS.

In terms of tissue distribution, expressed by the skin glands.

It is found in the secreted. Its function is as follows. Has antimicrobial activity against Gram-negative bacterium E.coli ATCC 25922 (MIC=100 uM), Gram-positive bacterium S.auerus ATCC 25923 (MIC=25 uM). The sequence is that of Xenoposin precursor fragment B2 from Xenopus borealis (Kenyan clawed frog).